The sequence spans 692 residues: Elongation factor G (692 aa).

The tr-type G domain occupies 8 to 282 (KDTRNIGIMA…AVLDYLPSPL (275 aa)). GTP-binding positions include 17 to 24 (AHIDAGKT), 81 to 85 (DTPGH), and 135 to 138 (NKMD).

Belongs to the TRAFAC class translation factor GTPase superfamily. Classic translation factor GTPase family. EF-G/EF-2 subfamily.

The protein resides in the cytoplasm. Functionally, catalyzes the GTP-dependent ribosomal translocation step during translation elongation. During this step, the ribosome changes from the pre-translocational (PRE) to the post-translocational (POST) state as the newly formed A-site-bound peptidyl-tRNA and P-site-bound deacylated tRNA move to the P and E sites, respectively. Catalyzes the coordinated movement of the two tRNA molecules, the mRNA and conformational changes in the ribosome. The polypeptide is Elongation factor G (Shouchella clausii (strain KSM-K16) (Alkalihalobacillus clausii)).